Reading from the N-terminus, the 512-residue chain is Cytoplasmic tRNA 2-thiolation protein 2-A (512 aa).

Belongs to the CTU2/NCS2 family.

Its subcellular location is the cytoplasm. It functions in the pathway tRNA modification; 5-methoxycarbonylmethyl-2-thiouridine-tRNA biosynthesis. Its function is as follows. Plays a central role in 2-thiolation of mcm(5)S(2)U at tRNA wobble positions of tRNA(Lys), tRNA(Glu) and tRNA(Gln). May act by forming a heterodimer with ctu1/atpbd3 that ligates sulfur from thiocarboxylated urm1 onto the uridine of tRNAs at wobble position. This chain is Cytoplasmic tRNA 2-thiolation protein 2-A (ctu2-a), found in Xenopus laevis (African clawed frog).